A 451-amino-acid chain; its full sequence is MDWSEDPGMPPPAPPVLSVSELNRMARRALESQLPLLWVEGEVSNFMRAASGHWYFSLKDATAQVRCVMFRGRNQFAEFTPANGDHVEIRALPSLYEARGEFQLGAESIRRAGAGRLYEAFVRLKAKLEGEGLFDPAKKRALPRFPRCLGVVTSPQAAALRDVLTALGRRMPGLPVILYPTPVQGSGAGAQIAAAIRAAGTRAECDVLLVCRGGGALEDLWAFNDEAVARAIAASPIPVVSGVGHETDFTLADFAADLRAPTPTAAAELASPVAEEMLRALERHARLLRQHHARRQQADMQRLDYLARRLIHPAQQLRRRQLGIAQLAQRLHGAVRARLTREQLRIAQLGERRTSPRHALQRQQQVLESLGARAARAAESARIGRGLTLARLASSLAHLNPDNVLARGYSIVQQENGAVVHDAATLRAGDGLEIRFHRGAAHARVESAQPE.

It belongs to the XseA family. As to quaternary structure, heterooligomer composed of large and small subunits.

Its subcellular location is the cytoplasm. It carries out the reaction Exonucleolytic cleavage in either 5'- to 3'- or 3'- to 5'-direction to yield nucleoside 5'-phosphates.. Its function is as follows. Bidirectionally degrades single-stranded DNA into large acid-insoluble oligonucleotides, which are then degraded further into small acid-soluble oligonucleotides. This Thiobacillus denitrificans (strain ATCC 25259 / T1) protein is Exodeoxyribonuclease 7 large subunit.